We begin with the raw amino-acid sequence, 141 residues long: 16 kDa protein (141 aa).

The tract at residues 95-116 is disordered; sequence ESSSATRKKSHNSKNSKKKFKE. Positions 100-113 are enriched in basic residues; that stretch reads TRKKSHNSKNSKKK.

This Tobacco rattle virus (strain PSG) protein is 16 kDa protein.